Reading from the N-terminus, the 582-residue chain is WD repeat-containing protein JIP5 (582 aa).

5 WD repeats span residues 27-68 (KYPE…EAQS), 125-168 (RHKG…VLSK), 177-216 (DKND…SNQL), 265-310 (DQED…LMDQ), and 373-410 (GPAD…LNSD). Disordered stretches follow at residues 405–496 (ETLN…DTEL) and 531–582 (TKEQ…FDDL). 2 stretches are compositionally biased toward acidic residues: residues 410–438 (DSDD…DDDV) and 447–485 (EVND…ENVT). 2 stretches are compositionally biased toward basic and acidic residues: residues 531 to 540 (TKEQSTKKAD) and 570 to 582 (QKHE…FDDL).

The protein belongs to the WD repeat WDR55 family.

The protein localises to the nucleus. Its subcellular location is the nucleolus. The protein is WD repeat-containing protein JIP5 (JIP5) of Debaryomyces hansenii (strain ATCC 36239 / CBS 767 / BCRC 21394 / JCM 1990 / NBRC 0083 / IGC 2968) (Yeast).